A 1078-amino-acid polypeptide reads, in one-letter code: Cell wall acid trehalase ATC1 (1078 aa).

A signal peptide spans 1 to 54; the sequence is MAANSSFFLADNCAPHNQSFIQFCIHAASKKKGRIALMCLANLFLLFSFHLLYA. 8 N-linked (GlcNAc...) asparagine glycosylation sites follow: Asn4, Asn17, Asn150, Asn184, Asn242, Asn287, Asn301, and Asn350. Position 478–479 (478–479) interacts with substrate; it reads WD. Asn532, Asn591, and Asn601 each carry an N-linked (GlcNAc...) asparagine glycan. The active-site Proton donor is Glu607. N-linked (GlcNAc...) asparagine glycans are attached at residues Asn661 and Asn670. Residue 676–677 coordinates substrate; the sequence is KQ. Residues Asn829, Asn837, Asn904, Asn922, Asn931, Asn946, Asn1003, and Asn1037 are each glycosylated (N-linked (GlcNAc...) asparagine).

The protein belongs to the glycosyl hydrolase 65 family.

The protein localises to the secreted. Its subcellular location is the cell wall. It catalyses the reaction alpha,alpha-trehalose + H2O = alpha-D-glucose + beta-D-glucose. Its function is as follows. Cell wall acid trehalase that catalyzes hydrolysis of the disaccharide trehalose and required for growth on trehalose as carbon source. Plays a role in dimorphic conversion and virulence. The protein is Cell wall acid trehalase ATC1 (ATC1) of Candida albicans (strain SC5314 / ATCC MYA-2876) (Yeast).